The chain runs to 70 residues: uncharacterized protein (70 aa).

The helical transmembrane segment at Ile15 to Val37 threads the bilayer.

It is found in the membrane. This is an uncharacterized protein from Dictyostelium discoideum (Social amoeba).